Here is a 655-residue protein sequence, read N- to C-terminus: p-hydroxybenzoic acid efflux pump subunit AaeB (655 aa).

The next 11 helical transmembrane spans lie at 13 to 33 (FAVK…HFQL), 38 to 58 (WAVL…GGEP), 69 to 89 (LRII…ISMI), 93 to 113 (LLMI…SSLV), 121 to 141 (WGLS…EPLL), 152 to 172 (EIVI…PRSI), 370 to 390 (LFWL…IAVV), 407 to 427 (FIYG…VIIP), 431 to 451 (QSML…GIEV), 459 to 479 (MGAL…TFHF), and 482 to 502 (FLDS…VILL).

Belongs to the aromatic acid exporter ArAE (TC 2.A.85) family.

It localises to the cell inner membrane. Forms an efflux pump with AaeA. Could function as a metabolic relief valve, allowing to eliminate certain compounds when they accumulate to high levels in the cell. This Salmonella dublin (strain CT_02021853) protein is p-hydroxybenzoic acid efflux pump subunit AaeB.